The chain runs to 287 residues: 4-diphosphocytidyl-2-C-methyl-D-erythritol kinase (287 aa).

The active site involves Lys11. 93–103 (PFGAGLGGGSS) contacts ATP. Asp135 is a catalytic residue.

This sequence belongs to the GHMP kinase family. IspE subfamily.

The catalysed reaction is 4-CDP-2-C-methyl-D-erythritol + ATP = 4-CDP-2-C-methyl-D-erythritol 2-phosphate + ADP + H(+). It participates in isoprenoid biosynthesis; isopentenyl diphosphate biosynthesis via DXP pathway; isopentenyl diphosphate from 1-deoxy-D-xylulose 5-phosphate: step 3/6. Catalyzes the phosphorylation of the position 2 hydroxy group of 4-diphosphocytidyl-2C-methyl-D-erythritol. The protein is 4-diphosphocytidyl-2-C-methyl-D-erythritol kinase of Pelodictyon phaeoclathratiforme (strain DSM 5477 / BU-1).